Here is a 297-residue protein sequence, read N- to C-terminus: Probable endonuclease 4 (297 aa).

Positions 69, 110, 145, 179, 182, 214, 227, 229, and 259 each coordinate Zn(2+).

It belongs to the AP endonuclease 2 family. Zn(2+) serves as cofactor.

It carries out the reaction Endonucleolytic cleavage to 5'-phosphooligonucleotide end-products.. Its function is as follows. Endonuclease IV plays a role in DNA repair. It cleaves phosphodiester bonds at apurinic or apyrimidinic (AP) sites, generating a 3'-hydroxyl group and a 5'-terminal sugar phosphate. This chain is Probable endonuclease 4, found in Bacillus velezensis (strain DSM 23117 / BGSC 10A6 / LMG 26770 / FZB42) (Bacillus amyloliquefaciens subsp. plantarum).